A 504-amino-acid chain; its full sequence is Ribose import ATP-binding protein RbsA (504 aa).

ABC transporter domains follow at residues 6 to 242 and 250 to 495; these read LELN…VGRR and IDVQ…VGKT. 38 to 45 serves as a coordination point for ATP; the sequence is GENGAGKS.

This sequence belongs to the ABC transporter superfamily. Ribose importer (TC 3.A.1.2.1) family. In terms of assembly, the complex is composed of an ATP-binding protein (RbsA), two transmembrane proteins (RbsC) and a solute-binding protein (RbsB).

The protein resides in the cell inner membrane. It catalyses the reaction D-ribose(out) + ATP + H2O = D-ribose(in) + ADP + phosphate + H(+). Part of the ABC transporter complex RbsABC involved in ribose import. Responsible for energy coupling to the transport system. This Aliivibrio fischeri (strain ATCC 700601 / ES114) (Vibrio fischeri) protein is Ribose import ATP-binding protein RbsA.